A 605-amino-acid polypeptide reads, in one-letter code: Leucine-rich repeat-containing protein 40 (605 aa).

The segment at 1 to 21 is disordered; sequence MSRFKRGGKAPDPLSGFRAPK. 19 LRR repeats span residues 83-104, 106-127, 129-151, 152-173, 175-196, 198-219, 221-242, 244-265, 266-287, 290-311, 313-335, 336-357, 429-450, 453-475, 476-497, 499-520, 522-543, 546-567, and 569-590; these read DLTK…ISLL, ALVV…IREL, NLQK…QHLQ, NLKS…IGHL, ILEE…VGQL, GLVK…IGKM, NLRQ…VAGM, SLEQ…PFLT, KLKE…HLQN, SLSV…ISLL, GLER…GSLP, NLKS…ILNK, PITT…IVEM, SVYD…CMLL, KLTH…MEAL, RLQS…LYTI, NLET…QLKK, KLST…LGNC, and SLRA…ILAK.

The polypeptide is Leucine-rich repeat-containing protein 40 (lrrc40) (Xenopus laevis (African clawed frog)).